We begin with the raw amino-acid sequence, 56 residues long: Hydrophobic protein LTI6A (56 aa).

2 consecutive transmembrane segments (helical) span residues 11–31 (IILA…CGIE) and 34–54 (ICLL…VWVI).

The protein belongs to the UPF0057 (PMP3) family. Expressed in shoot of cold stressed seedlings.

It localises to the membrane. Functionally, plays a role in the regulation of membrane potential. Could mediate a proton leak. The polypeptide is Hydrophobic protein LTI6A (LTI6A) (Oryza sativa subsp. japonica (Rice)).